The following is a 389-amino-acid chain: S-adenosylmethionine synthase (389 aa).

Position 19 (His-19) interacts with ATP. Asp-21 serves as a coordination point for Mg(2+). Residue Glu-47 participates in K(+) binding. Glu-60 and Gln-103 together coordinate L-methionine. The interval 103–113 is flexible loop; that stretch reads QSVDIAQGVSR. ATP-binding positions include 168–170, 234–235, Asp-243, 249–250, Ala-266, and Lys-270; these read DGK, RF, and RK. Asp-243 is an L-methionine binding site. Lys-274 contributes to the L-methionine binding site.

The protein belongs to the AdoMet synthase family. Homotetramer; dimer of dimers. The cofactor is Mg(2+). K(+) serves as cofactor.

It is found in the cytoplasm. It carries out the reaction L-methionine + ATP + H2O = S-adenosyl-L-methionine + phosphate + diphosphate. The protein operates within amino-acid biosynthesis; S-adenosyl-L-methionine biosynthesis; S-adenosyl-L-methionine from L-methionine: step 1/1. Functionally, catalyzes the formation of S-adenosylmethionine (AdoMet) from methionine and ATP. The overall synthetic reaction is composed of two sequential steps, AdoMet formation and the subsequent tripolyphosphate hydrolysis which occurs prior to release of AdoMet from the enzyme. This Solidesulfovibrio magneticus (strain ATCC 700980 / DSM 13731 / RS-1) (Desulfovibrio magneticus) protein is S-adenosylmethionine synthase.